Reading from the N-terminus, the 339-residue chain is DNA-directed RNA polymerase subunit alpha (339 aa).

Positions 1-233 are alpha N-terminal domain (alpha-NTD); the sequence is MVREEIAVAT…DLFIPFLHAE (233 aa). Residues 267–339 are alpha C-terminal domain (alpha-CTD); the sequence is KKMALKSIFI…FGFDLPKNGK (73 aa).

It belongs to the RNA polymerase alpha chain family. In plastids the minimal PEP RNA polymerase catalytic core is composed of four subunits: alpha, beta, beta', and beta''. When a (nuclear-encoded) sigma factor is associated with the core the holoenzyme is formed, which can initiate transcription.

It is found in the plastid. Its subcellular location is the chloroplast. It catalyses the reaction RNA(n) + a ribonucleoside 5'-triphosphate = RNA(n+1) + diphosphate. Functionally, DNA-dependent RNA polymerase catalyzes the transcription of DNA into RNA using the four ribonucleoside triphosphates as substrates. This chain is DNA-directed RNA polymerase subunit alpha, found in Piper cenocladum (Ant piper).